The primary structure comprises 291 residues: tRNA (guanine-N(1)-)-methyltransferase (291 aa).

Residues Gly160 and 184-189 contribute to the S-adenosyl-L-methionine site; that span reads IGDYVL.

Belongs to the RNA methyltransferase TrmD family. Homodimer.

Its subcellular location is the cytoplasm. The catalysed reaction is guanosine(37) in tRNA + S-adenosyl-L-methionine = N(1)-methylguanosine(37) in tRNA + S-adenosyl-L-homocysteine + H(+). In terms of biological role, specifically methylates guanosine-37 in various tRNAs. This Corynebacterium efficiens (strain DSM 44549 / YS-314 / AJ 12310 / JCM 11189 / NBRC 100395) protein is tRNA (guanine-N(1)-)-methyltransferase.